The sequence spans 157 residues: Small ribosomal subunit protein bS16 (157 aa).

Residues 114-157 (NEGPTAEAITEKKKKAKEEAAAKAAAEAEAAAKAEEAPAEEAAE) are disordered.

It belongs to the bacterial ribosomal protein bS16 family.

The sequence is that of Small ribosomal subunit protein bS16 from Corynebacterium diphtheriae (strain ATCC 700971 / NCTC 13129 / Biotype gravis).